Consider the following 100-residue polypeptide: Cobalt transport protein CbiN (100 aa).

Transmembrane regions (helical) follow at residues 8–28 and 69–89; these read LSNW…LIFV and LLFS…VGLY.

Belongs to the CbiN family. As to quaternary structure, forms an energy-coupling factor (ECF) transporter complex composed of an ATP-binding protein (A component, CbiO), a transmembrane protein (T component, CbiQ) and 2 possible substrate-capture proteins (S components, CbiM and CbiN) of unknown stoichimetry.

The protein localises to the cell inner membrane. Its pathway is cofactor biosynthesis; adenosylcobalamin biosynthesis. Part of the energy-coupling factor (ECF) transporter complex CbiMNOQ involved in cobalt import. The polypeptide is Cobalt transport protein CbiN (Nostoc sp. (strain PCC 7120 / SAG 25.82 / UTEX 2576)).